We begin with the raw amino-acid sequence, 617 residues long: Putative metal ion transporter C17A12.14 (617 aa).

The interval 1-141 (MPSNTSRSVP…GKNTRDQPSP (141 aa)) is disordered. Serine 105 is subject to Phosphoserine. Residues 117 to 136 (SHPEDIQRKEFETENGKNTR) are compositionally biased toward basic and acidic residues. Phosphoserine is present on residues serine 152, serine 162, serine 226, and serine 241. Helical transmembrane passes span 560–580 (TILG…GMNV) and 590–610 (LGWF…SFIL).

It belongs to the CorA metal ion transporter (MIT) (TC 1.A.35) family. As to quaternary structure, interacts with sad1.

The protein resides in the membrane. The polypeptide is Putative metal ion transporter C17A12.14 (Schizosaccharomyces pombe (strain 972 / ATCC 24843) (Fission yeast)).